Reading from the N-terminus, the 335-residue chain is Phosphate acyltransferase (335 aa).

Belongs to the PlsX family. In terms of assembly, homodimer. Probably interacts with PlsY.

Its subcellular location is the cytoplasm. It carries out the reaction a fatty acyl-[ACP] + phosphate = an acyl phosphate + holo-[ACP]. The protein operates within lipid metabolism; phospholipid metabolism. Functionally, catalyzes the reversible formation of acyl-phosphate (acyl-PO(4)) from acyl-[acyl-carrier-protein] (acyl-ACP). This enzyme utilizes acyl-ACP as fatty acyl donor, but not acyl-CoA. In Streptococcus equi subsp. zooepidemicus (strain H70), this protein is Phosphate acyltransferase.